Here is a 225-residue protein sequence, read N- to C-terminus: MAERLRIAVDGPAGAGKGTVCRAVARRYQWAYLDTGAIYRAVALHALNSENFEETSLAQWAAQMDFRFEVDAQGDAHAFLEGTEVTNKLRDEQVGETASQVAAMPAVRTALLDFQRNYGSPQSVILDGRDVGTVVLPDADLKIYLTASLQARAQRRTLELQGKGESVSMDRIKSRIEERDARDQSRATAPLAAAPDAQTVDTTYLSQTESIETVARLVASLLEKP.

11–19 serves as a coordination point for ATP; sequence GPAGAGKGT. Residues 169 to 185 show a composition bias toward basic and acidic residues; that stretch reads MDRIKSRIEERDARDQS. Positions 169–195 are disordered; it reads MDRIKSRIEERDARDQSRATAPLAAAP.

It belongs to the cytidylate kinase family. Type 1 subfamily.

The protein resides in the cytoplasm. It carries out the reaction CMP + ATP = CDP + ADP. It catalyses the reaction dCMP + ATP = dCDP + ADP. The chain is Cytidylate kinase from Magnetococcus marinus (strain ATCC BAA-1437 / JCM 17883 / MC-1).